The following is a 682-amino-acid chain: Potassium-transporting ATPase ATP-binding subunit (682 aa).

4 consecutive transmembrane segments (helical) span residues 34–54, 62–82, 219–239, and 254–274; these read PVMF…IAMA, ALFS…ANFA, IALT…TATL, and VLVA…LSAI. The active-site 4-aspartylphosphate intermediate is the Asp307. ATP is bound by residues Asp344, Glu348, 377 to 384, and Lys395; that span reads FTAQSRMS. 2 residues coordinate Mg(2+): Asp518 and Asp522. The next 3 membrane-spanning stretches (helical) occupy residues 588-608, 616-636, and 656-676; these read FAII…LNIM, AILS…PLAL, and IYGL…DLLL.

The protein belongs to the cation transport ATPase (P-type) (TC 3.A.3) family. Type IA subfamily. In terms of assembly, the system is composed of three essential subunits: KdpA, KdpB and KdpC.

The protein resides in the cell inner membrane. It catalyses the reaction K(+)(out) + ATP + H2O = K(+)(in) + ADP + phosphate + H(+). Part of the high-affinity ATP-driven potassium transport (or Kdp) system, which catalyzes the hydrolysis of ATP coupled with the electrogenic transport of potassium into the cytoplasm. This subunit is responsible for energy coupling to the transport system and for the release of the potassium ions to the cytoplasm. The polypeptide is Potassium-transporting ATPase ATP-binding subunit (Escherichia coli (strain K12 / MC4100 / BW2952)).